Consider the following 365-residue polypeptide: Alanine racemase (365 aa).

The active-site Proton acceptor; specific for D-alanine is Lys-32. The residue at position 32 (Lys-32) is an N6-(pyridoxal phosphate)lysine. Residue Arg-128 coordinates substrate. The active-site Proton acceptor; specific for L-alanine is Tyr-257. Met-305 provides a ligand contact to substrate.

Belongs to the alanine racemase family. It depends on pyridoxal 5'-phosphate as a cofactor.

It catalyses the reaction L-alanine = D-alanine. It participates in amino-acid biosynthesis; D-alanine biosynthesis; D-alanine from L-alanine: step 1/1. In terms of biological role, catalyzes the interconversion of L-alanine and D-alanine. May also act on other amino acids. The protein is Alanine racemase (alr) of Francisella philomiragia subsp. philomiragia (strain ATCC 25017 / CCUG 19701 / FSC 153 / O#319-036).